Consider the following 483-residue polypeptide: Probable cytosol aminopeptidase (483 aa).

Positions 252 and 257 each coordinate Mn(2+). The active site involves K264. Positions 275, 334, and 336 each coordinate Mn(2+). Residue R338 is part of the active site.

It belongs to the peptidase M17 family. Mn(2+) is required as a cofactor.

The protein resides in the cytoplasm. It catalyses the reaction Release of an N-terminal amino acid, Xaa-|-Yaa-, in which Xaa is preferably Leu, but may be other amino acids including Pro although not Arg or Lys, and Yaa may be Pro. Amino acid amides and methyl esters are also readily hydrolyzed, but rates on arylamides are exceedingly low.. The catalysed reaction is Release of an N-terminal amino acid, preferentially leucine, but not glutamic or aspartic acids.. Presumably involved in the processing and regular turnover of intracellular proteins. Catalyzes the removal of unsubstituted N-terminal amino acids from various peptides. The protein is Probable cytosol aminopeptidase of Legionella pneumophila (strain Corby).